A 3890-amino-acid chain; its full sequence is MNYRDKIQKFSIRKYTVGTFSTVIATLVFLGFNTSQAHAAETNQPASVVKQKQQSNNEQTENRESQVQNSQNSQNSQSLSATHENEQPNNSQANLVNQKVAQSSTTNDEQPASQNVNTKKDSATAATTQPDKEESKHKQNESQSANKNGNDNRAAHVENHEANVVTASDSSDNGNVQHDRNELQAFFDANYHDYRFIDRENADSGTFNYVKGIFDKINTLLGSNDPINNKDLQLAYKELEQAVALIRTMPQRQQTSRRSNRIQTRSVESRAAEPRSVSDYQNANSSYYVENANDGSGYPVGTYINASSKGAPYNLPTTPWNTLKASDSKEIALMTAKQTGDGYQWVIKFNKGHAPHQNMIFWFALPADQVPVGRTDFVTVNSDGTNVQWSHGAGAGANKPLQQMWEYGVNDPDRSHDFKIRNRSGQVIYSWPTVHVYSLEDLSRASDYFSEAGATPATKAFGRQNFEYINGQKPAESPGVPKVYTFIGQGDASYTISFKTQGPTVNKLYYAAGGRALEYNQLFMYSQLYVESTQDHQQRLNGLRQVVNRTYRIGTTKRVEVSQGNVQTKKVLESTNLNIDDFVDDPLSYVKTPSNKVLGFYPTNANTNAFRPGGVQELNEYQLSQLFTDQKLQEAARTRNPIRLMIGFDYPDGYGNSETLVPVNLTVLPEIQHNIKFFKNDDTQNIAEKPFSKQAGHPVFYVYAGNQGNASVNLGGSVTSIQPLRINLTSNENFTDKDWQITGIPRTLHIENSTNRTNNARERNIELVGNLLPGDYFGTIRFGRKEQLFEIRVKPHTPTITTTAEQLRGTALQKVPVNISGIPLDPSALVYLVAPTNQTTNGGSEADQIPSGYTILATGTPDGVHNTITIRPQDYVVFIPPVGKQIRAVVYYNKVVASNMSNAVTILPDDIPPTINNPVGINAKYYRGDEVNFTMGVSDRHSGIKNTTITTLPSGWTSNLTKSDNKNGSLAITGRVSMNQAFNSDITFKVSATDNVNNTTNDSQSKHVSIHVGKISEDAHPIVLGNTEKVVVVNPTAVSNDEKQSIITAFMNKNQNIRGYLASTDPVTVDNNGNVTLHYRDGSSTTLDATNVMTYEPVVKSEYQTANAAKTATVTIAKGQSFNIGDIKQYFTLSNGQAIPNGTFTNITSDRTIPTAQEVSQMNAGTQLYHIVASNAYHKDTEDFYISLKIVDVKQPEGDQRVYRTSTYDLTTDEISKVKQAFINANRDVITLAEGDISVTNTPNGANVSTITVNINKGRLTKSFASNLANMNFLRWVNFPQDYTVTWTNAKIANRPTDGGLSWSDDHKSLIYRYDATLGTQITTNDILTMLKATTTVPGLRNNITGNEKAQAEAGGRPNYRTTGYSQSNATTDGQRQFTLNGQVIQILDIINPSNGYGGQPVTNSNTRANHSNSTVVNVNEPAANGAGAFTIDHVVKSNSTHNASDAVYKAQLYLTPYGPKQYVEHLNQNTGNTTDAINIYFVPSDLVNPTISVGNYTNHQVFSGETFTNTITANDNFGVQSVTVPNTSQITGTVDNNHQHVSATAPNVTSATSKTINLLATDTSGNTATTSFNVTVKPLRDKYRVGTSSTAANPVRIANISNNATVSQADQTTIINSLTFTSNAPNRNYATASANEITSKTVSNVSRTGNNANVTVTVTHQDGTTSTVTVPVKHVIPEIVAHSHYTVQGQDFPAGNGSSAADYFKLSNGSAIPDATITWVSGQAPNKDNTRIGEDITVTAHILIDGETTPITKTATYKVVRTVPKHVFETARGVLYPGVSDMYDAKQYVKPVNNSWSTNAQHMNFQFVGTYGPNKDVVGISTRLIRVTYDNRQTEDLTILSKVKPDPPRIDANSVTYKAGLTNQEIKVNNVLNNSSVKLFKADNTPLNVTNITHGSGFSSVVTVSDALPNGGIKAKSSISMNNVTYTTQDEHGQVVTVTRNESVDSNDSASVTVTPQLQATTEGAVFIKGGDGFDFGHVERFIQNPPHGATVAWHDSPDTWKNTVGNTHKTAVVTLPSGQGTRNVEVPVKVYPVANAKAPSRDVKGQNLTHGTNAIDYITFDPNTNTNGITAAWANRQQPNNQQAGVQHLNVDVTYPGISAAKRVPVTVNVYQFEFPQTTYTTTVGGTLASGTQASGYAHMQNASGLPTDGFTYKWNRDTTGTNDANWAAMNKPNTAQVVNAKYDVIYNGHTFATSLPAKFVVKDVQPAKPTVTETAAGAITIAPGANQTVNTHAGNVTTYADKLVIKRNGNVVTTFTRRNNTSPWVKEASADNVTGIVGTNNGITVAAGTFNPADTIQVVATQGSGETISDEQRSDDFTVVAPQPNQATTKIWQNGHIDITPNNPSGHLINPTQAMDIAYTEKVGNGAEHSKTINVVRGQNNQWTIANKPDYVTLDAQTGKVTFNANTIKPNSSITITPKAGTGHSVSSNPSTLTAPAAHTVNTTEIVKDYGSNVTAAEINNAVQVANKRTATIKNGTAMPTNLAGGSTTTIPVTVTYNDGSTEEVQESIFTKADKRELITAKNHLDDPVSTEGKKPGTITQYNNAMHNAQQQINTAKTEAQQVINNERATPQQVSDALTKVRAAQTKIDQAKALLQNKEDNSQLVTSKNNLQSSVNQVPSTAGMTQQSIDNYNAKKREAETEITAAQRVIDNGDATAQQISDEKHRVDNALTALNQAKHDLTADTHALEQAVQQLNRTGTTTGKKPASITAYNNSIRALQSDLTSAKNSANAIIQKPIRTVQEVQSALTNVNRVNERLTQAINQLVPLADNSALRTAKTKLDEEINKSVTTDGMTQSSIQAYENAKRAGQTETTNAQNVINNGDATDQQIAAEKTKVEEKYNSLKQAIAGLTPDLAPLQTAKTQLQNDIDQPTSTTGMTSASVAAFNDKLSAARTKIQEIDRVLASHPDVATIRQNVTAANAAKTALDQARNGLTVDKAPLENAKNQLQHSIDTQTSTTGMTQDSINAYNAKLTAARNKVQQINQVLAGSPTVDQINTNTSAANQAKSDLDHARQALTPDKAPLQNAKTQLEQSINQPTDTTGMTTASLNAYNQKLQAARQKLTEINQVLNGNPTVQNINDKVAEANQAKDQLNTARQGLTLDRQPALTTLHGASNLNQAQQNNFTQQINAAQNHAALETIKSNITALNTAMTKLKDSVADNNTIKSGQNYTDATPANKQAYDNAVNAAKGVIGETTNPTMDVNTVNQKAASVKSTKDALDGQQNLQRAKTEATNAITHASDLNQAQKNALTQQVNSAQNVQAVNDIKQTTQSLNTAMTGLKRGVANHNQVVQSDNYVNADTNKKNDYNNAYNHANDIINGNAQHPVITPSDVNNALSNVTSKEHALNGEAKLNAAKQEANTALGHLNNLNNVQRQNLQSQINGAHQIDAVNTIKQNATNLNSAMGNLRQAVADKDQVKRTEDYADADTAKQNAYNSAVSSAETIINQTANPTMSVDDVNRATSAVTTNKNALNGDEKLVQSKTDAARAIDALPHLNNAQKADVKSKINAASNIAGVNTVKQQGTDLNTAMGNLQGAINDEQTTLNSQNYQDATPSKKTAYTNAVQAAKDILNKSNGQNKTKDQVTEAMNQVNSAKNNLDGTRLLDQAKQTAKQQLNNMTHLTTAQKTNLTNQINSGTTVAGVHTVQSNANTLDQAMNTLRQSIANNDATKASEDYVDANNDKQTAYNNAVAAAETIINANSNPEMNPSTITQKAEQVNSSKTALNGDENLATAKQNAKTYLNTLTSITDAQKNNLISQISSATRVSGVDTVKQNAQHLDQAMANLQNGINNESQVKSSEKYRDADTNKQQEYDNAITAAKAILNKSTGPNTAQNAVEAALQRVNTAKDALNGDAKLIAAQNAAKQHLGTLTHITTAQRNDLTNQIS.

Positions 1 to 39 are cleaved as a signal peptide; that stretch reads MNYRDKIQKFSIRKYTVGTFSTVIATLVFLGFNTSQAHA. The segment covering 41-59 has biased composition (polar residues); the sequence is ETNQPASVVKQKQQSNNEQ. Disordered regions lie at residues 41-152, 249-277, 1347-1372, and 2418-2438; these read ETNQ…GNDN, MPQR…PRSV, NEKA…NATT, and TITP…TLTA. Low complexity predominate over residues 65-78; it reads SQVQNSQNSQNSQS. The segment covering 79–117 has biased composition (polar residues); sequence LSATHENEQPNNSQANLVNQKVAQSSTTNDEQPASQNVN. Basic and acidic residues predominate over residues 130–140; it reads PDKEESKHKQN. Polar residues-rich tracts occupy residues 141 to 151, 250 to 266, 1360 to 1372, and 2427 to 2438; these read ESQSANKNGND, PQRQ…QTRS, YRTT…NATT, and HSVSSNPSTLTA. FIVAR domains lie at 2524–2580, 2610–2666, 2687–2750, 2780–2836, 2864–2919, 2947–3002, 3030–3085, 3154–3212, 3280–3339, 3407–3465, 3533–3591, 3659–3717, and 3785–3843; these read AKNH…VSDA, SKNN…ISDE, DTHA…VQSA, AKTK…IAAE, AKTQ…IRQN, AKNQ…INTN, AKTQ…INDK, AMTK…VNQK, AMTG…VNNA, AMGN…VNRA, AMGN…VTEA, AMNT…ITQK, and AMAN…VEAA.

The protein is Extracellular matrix-binding protein EbhB (ebhB) of Staphylococcus aureus (strain N315).